The following is a 155-amino-acid chain: Molybdopterin synthase catalytic subunit 2 (155 aa).

Substrate contacts are provided by residues 101-102 (HR), K117, and 124-126 (KKE).

This sequence belongs to the MoaE family. MOCS2B subfamily. Heterotetramer; composed of 2 small (MOCS2A) and 2 large (MOCS2B) subunits.

It localises to the cytoplasm. The enzyme catalyses 2 [molybdopterin-synthase sulfur-carrier protein]-C-terminal-Gly-aminoethanethioate + cyclic pyranopterin phosphate + H2O = molybdopterin + 2 [molybdopterin-synthase sulfur-carrier protein]-C-terminal Gly-Gly + 2 H(+). Its pathway is cofactor biosynthesis; molybdopterin biosynthesis. Its function is as follows. Catalytic subunit of the molybdopterin synthase complex, a complex that catalyzes the conversion of precursor Z into molybdopterin. Acts by mediating the incorporation of 2 sulfur atoms from thiocarboxylated MOCS2A into precursor Z to generate a dithiolene group. This chain is Molybdopterin synthase catalytic subunit 2, found in Aedes aegypti (Yellowfever mosquito).